Reading from the N-terminus, the 152-residue chain is Phosphopantetheine adenylyltransferase (152 aa).

S9 is a binding site for substrate. ATP is bound by residues 9-10 (SF) and H17. The substrate site is built by K41, T73, and R87. ATP-binding positions include 88–90 (GLR), E98, and 122–128 (TSFISSS).

The protein belongs to the bacterial CoaD family. In terms of assembly, homohexamer. It depends on Mg(2+) as a cofactor.

It localises to the cytoplasm. It catalyses the reaction (R)-4'-phosphopantetheine + ATP + H(+) = 3'-dephospho-CoA + diphosphate. The protein operates within cofactor biosynthesis; coenzyme A biosynthesis; CoA from (R)-pantothenate: step 4/5. Functionally, reversibly transfers an adenylyl group from ATP to 4'-phosphopantetheine, yielding dephospho-CoA (dPCoA) and pyrophosphate. The protein is Phosphopantetheine adenylyltransferase of Flavobacterium johnsoniae (strain ATCC 17061 / DSM 2064 / JCM 8514 / BCRC 14874 / CCUG 350202 / NBRC 14942 / NCIMB 11054 / UW101) (Cytophaga johnsonae).